Consider the following 629-residue polypeptide: (-)-alpha-pinene synthase, chloroplastic (629 aa).

Residues 1-48 (MSPVSVISLPSDLCLPTSFIDRSGRELIPLHITIPNVAMRRQGKLMTR) constitute a chloroplast transit peptide. Aspartate 380, aspartate 384, and aspartate 532 together coordinate Mg(2+). A DDXXD motif motif is present at residues 380–384 (DDMYD). Serine 540 lines the K(+) pocket.

This sequence belongs to the terpene synthase family. Tpsd subfamily. Mg(2+) serves as cofactor. The cofactor is Mn(2+). It depends on K(+) as a cofactor.

The protein localises to the plastid. It is found in the chloroplast. The catalysed reaction is (2E)-geranyl diphosphate = (1S,5S)-alpha-pinene + diphosphate. It participates in terpene metabolism; oleoresin biosynthesis. Functionally, involved in defensive oleoresin formation in conifers in response to insect attack or other injury. Involved in monoterpene (C10) olefins biosynthesis. Produces mainly (-)-alpha-pinene (79%) and lesser amounts of (-)-beta-pinene (4.2%), nearly racemic mixtures of camphene (2.8% (+)/2.2% (-)) and limonene (2.4% (+)/3.7% (-)), as well as small amounts of (+)-alpha-pinene (3.3%) and (+)-beta-pinene (2.4%). The polypeptide is (-)-alpha-pinene synthase, chloroplastic (PT1) (Pinus taeda (Loblolly pine)).